Consider the following 336-residue polypeptide: Atypical chemokine receptor 1 (336 aa).

Residues 1-63 (MGNCLHQAEL…CNLLDDSSLP (63 aa)) are Extracellular-facing. N-linked (GlcNAc...) asparagine glycans are attached at residues N16 and N33. 2 disulfides stabilise this stretch: C51–C276 and C129–C195. A helical membrane pass occupies residues 64 to 84 (FFILASVLGILASSTVLFMLF). The Cytoplasmic portion of the chain corresponds to 85–95 (RPLFRWQLCPG). A helical membrane pass occupies residues 96 to 116 (WPVLAQLAVGSALFSIVVPIL). Over 117–129 (APGLGNTRSSALC) the chain is Extracellular. A helical transmembrane segment spans residues 130 to 153 (SLGYCVWYGSAFAQALLLGCHASL). The Cytoplasmic segment spans residues 154-166 (GPKLGAGQVPGLT). A helical transmembrane segment spans residues 167 to 187 (LGLTVGLWGAAALLTVPITLA). Topologically, residues 188–207 (SGASDGLCTPIYSTELKALQ) are extracellular. A helical transmembrane segment spans residues 208 to 228 (ATHTVACFAIFVLLPLGLFGA). The Cytoplasmic segment spans residues 229–244 (KGVKKALGMGPGPWMT). The helical transmembrane segment at 245 to 265 (ILWIWFIFWWPHGVVLGLDFL) threads the bilayer. The Extracellular segment spans residues 266–287 (VRSKLLLLPTCLAQQVLDLLLN). Residues 288 to 308 (LAEALTIVHCVATPLLLALFC) form a helical membrane-spanning segment. Residues 309 to 336 (HQATRTLLPSLPLPERWSSPVDTLGSKS) are Cytoplasmic-facing.

Belongs to the G-protein coupled receptor 1 family. Atypical chemokine receptor subfamily.

The protein resides in the early endosome. It is found in the recycling endosome. The protein localises to the membrane. Its function is as follows. Atypical chemokine receptor that controls chemokine levels and localization via high-affinity chemokine binding that is uncoupled from classic ligand-driven signal transduction cascades, resulting instead in chemokine sequestration, degradation, or transcytosis. Also known as interceptor (internalizing receptor) or chemokine-scavenging receptor or chemokine decoy receptor. Has a promiscuous chemokine-binding profile, interacting with inflammatory chemokines of both the CXC and the CC subfamilies but not with homeostatic chemokines. Acts as a receptor for chemokines including CCL2, CCL5, CCL7, CCL11, CCL13, CCL14, CCL17, CXCL5, CXCL6, IL8/CXCL8, CXCL11, GRO, RANTES, MCP-1 and TARC. May regulate chemokine bioavailability and, consequently, leukocyte recruitment through two distinct mechanisms: when expressed in endothelial cells, it sustains the abluminal to luminal transcytosis of tissue-derived chemokines and their subsequent presentation to circulating leukocytes; when expressed in erythrocytes, serves as blood reservoir of cognate chemokines but also as a chemokine sink, buffering potential surges in plasma chemokine levels. This Sapajus apella (Brown-capped capuchin) protein is Atypical chemokine receptor 1 (ACKR1).